The following is a 486-amino-acid chain: Ribulose bisphosphate carboxylase large chain (486 aa).

The propeptide occupies 1–2 (MS). 2 residues coordinate substrate: Asn123 and Thr173. Lys175 acts as the Proton acceptor in catalysis. Lys177 contributes to the substrate binding site. Residues Lys201, Asp203, and Glu204 each coordinate Mg(2+). Lys201 bears the N6-carboxylysine mark. Ser208 carries the post-translational modification Phosphoserine. Residue His294 is the Proton acceptor of the active site. The substrate site is built by Arg295 and His327. At Thr330 the chain carries Phosphothreonine. Ser379 is a substrate binding site.

Belongs to the RuBisCO large chain family. Type I subfamily. In terms of assembly, heterohexadecamer of 8 large chains and 8 small chains; disulfide-linked. The disulfide link is formed within the large subunit homodimers. Requires Mg(2+) as cofactor. The disulfide bond which can form in the large chain dimeric partners within the hexadecamer appears to be associated with oxidative stress and protein turnover.

Its subcellular location is the plastid. The protein resides in the chloroplast. It carries out the reaction 2 (2R)-3-phosphoglycerate + 2 H(+) = D-ribulose 1,5-bisphosphate + CO2 + H2O. It catalyses the reaction D-ribulose 1,5-bisphosphate + O2 = 2-phosphoglycolate + (2R)-3-phosphoglycerate + 2 H(+). RuBisCO catalyzes two reactions: the carboxylation of D-ribulose 1,5-bisphosphate, the primary event in carbon dioxide fixation, as well as the oxidative fragmentation of the pentose substrate in the photorespiration process. Both reactions occur simultaneously and in competition at the same active site. The chain is Ribulose bisphosphate carboxylase large chain from Aethionema grandiflorum (Persian stone-cress).